We begin with the raw amino-acid sequence, 278 residues long: Trehalose/maltose transport system permease protein MalG (278 aa).

The next 6 membrane-spanning stretches (helical) occupy residues 12 to 32, 74 to 94, 106 to 126, 141 to 161, 186 to 206, and 242 to 262; these read IIGA…MIVV, IIIA…AAYA, IPIF…GYLF, LYFP…LSYF, IILP…FIAA, and GSVM…ALLF. Residues 70 to 262 form the ABC transmembrane type-1 domain; it reads LKNSIIIASL…IPLVIMALLF (193 aa).

This sequence belongs to the binding-protein-dependent transport system permease family. In terms of assembly, the complex is composed of two ATP-binding proteins (MalK), two transmembrane proteins (MalG and MalF) and a solute-binding protein (MalE).

It localises to the cell membrane. Its function is as follows. Part of the ABC transporter complex MalEFGK involved in trehalose/maltose import. Responsible for the translocation of the substrate across the membrane. The polypeptide is Trehalose/maltose transport system permease protein MalG (malG) (Thermococcus litoralis (strain ATCC 51850 / DSM 5473 / JCM 8560 / NS-C)).